A 74-amino-acid polypeptide reads, in one-letter code: MTDDNIRQIAFYGKGGIGKSTTSQNTLAAMAEMGQRILIVGCDPKADSTRLMLHSKAQTTVLHLAAERGAVEDI.

13–20 (GKGGIGKS) contacts ATP.

This sequence belongs to the NifH/BchL/ChlL family. In terms of assembly, homodimer. [4Fe-4S] cluster is required as a cofactor.

It carries out the reaction N2 + 8 reduced [2Fe-2S]-[ferredoxin] + 16 ATP + 16 H2O = H2 + 8 oxidized [2Fe-2S]-[ferredoxin] + 2 NH4(+) + 16 ADP + 16 phosphate + 6 H(+). Functionally, the key enzymatic reactions in nitrogen fixation are catalyzed by the nitrogenase complex, which has 2 components: the iron protein and the molybdenum-iron protein. This chain is Nitrogenase iron protein (nifH), found in Nostoc sp. (strain MUN 8820).